Here is a 288-residue protein sequence, read N- to C-terminus: Store-operated calcium entry regulator STIMATE (288 aa).

Residues 1–28 (MQGPGGNVSRGLPGGPASTVASGAGRCE) lie on the Cytoplasmic side of the membrane. The next 3 membrane-spanning stretches (helical) occupy residues 29–49 (SGALMHSFGIFLQGLLGVVAF), 69–89 (IWFLDTSKQAIGMLFIHFANV), and 102–122 (LYLINFLLDATVGMLLIYVGV). The GXXXG motif signature appears at 149 to 153 (GAWVG). 2 helical membrane-spanning segments follow: residues 156–176 (ALYIVIMIFEKSVVFIVLLIL) and 194–214 (LAIVMLIVPFFVNAFMFWVVD). The Cytoplasmic portion of the chain corresponds to 215 to 288 (NFLMRKGKTK…KKKHRFGLPV (74 aa)). Residues 228–288 (EERGANQDSR…KKKHRFGLPV (61 aa)) form a disordered region. Residues 241–246 (KVRYRR) form a required for localization in the endoplasmic reticulum region. A compositionally biased stretch (acidic residues) spans 261 to 272 (ADDEMEESDAEE). Residues 277 to 288 (PVKKKHRFGLPV) are compositionally biased toward basic residues.

This sequence belongs to the STIMATE family. In terms of assembly, homooligomer. Interacts with STIM1.

It is found in the endoplasmic reticulum membrane. Functionally, acts as a regulator of store-operated Ca(2+) entry (SOCE) at junctional sites that connect the endoplasmic reticulum (ER) and plasma membrane (PM), called ER-plasma membrane (ER-PM) junction or cortical ER. SOCE is a Ca(2+) influx following depletion of intracellular Ca(2+) stores. Acts by interacting with STIM1, promoting STIM1 conformational switch. Involved in STIM1 relocalization to ER-PM junctions. Contributes to the maintenance and reorganization of store-dependent ER-PM junctions. In Rattus norvegicus (Rat), this protein is Store-operated calcium entry regulator STIMATE.